A 201-amino-acid polypeptide reads, in one-letter code: MNTPVIGVLALQGDVREHLIALAAADAVAREVRRPEELAEVDGLVIPGGESTTISKLAHLFGMMEPLRARVRGGMPVYGTCAGMIMLADKILDPRSGQETIGGIDMIVRRNAFGRQNESFEATVDVKGVGGDPVEGVFIRAPWVESVGAEAEVLAEHGGHIVAVRQGNALATSFHPELTGDHRVHGLFVDMVRANRTPESL.

49–51 (GES) is an L-glutamine binding site. C81 serves as the catalytic Nucleophile. L-glutamine contacts are provided by residues R110 and 139 to 140 (IR). Active-site charge relay system residues include H175 and E177.

The protein belongs to the glutaminase PdxT/SNO family. In the presence of PdxS, forms a dodecamer of heterodimers. Only shows activity in the heterodimer.

It catalyses the reaction aldehydo-D-ribose 5-phosphate + D-glyceraldehyde 3-phosphate + L-glutamine = pyridoxal 5'-phosphate + L-glutamate + phosphate + 3 H2O + H(+). The catalysed reaction is L-glutamine + H2O = L-glutamate + NH4(+). The protein operates within cofactor biosynthesis; pyridoxal 5'-phosphate biosynthesis. Functionally, catalyzes the hydrolysis of glutamine to glutamate and ammonia as part of the biosynthesis of pyridoxal 5'-phosphate. The resulting ammonia molecule is channeled to the active site of PdxS. The sequence is that of Pyridoxal 5'-phosphate synthase subunit PdxT from Streptomyces avermitilis (strain ATCC 31267 / DSM 46492 / JCM 5070 / NBRC 14893 / NCIMB 12804 / NRRL 8165 / MA-4680).